Here is a 201-residue protein sequence, read N- to C-terminus: Endoribonuclease YbeY (201 aa).

3 residues coordinate Zn(2+): H156, H160, and H166.

The protein belongs to the endoribonuclease YbeY family. Zn(2+) is required as a cofactor.

The protein resides in the cytoplasm. Functionally, single strand-specific metallo-endoribonuclease involved in late-stage 70S ribosome quality control and in maturation of the 3' terminus of the 16S rRNA. This chain is Endoribonuclease YbeY, found in Cupriavidus pinatubonensis (strain JMP 134 / LMG 1197) (Cupriavidus necator (strain JMP 134)).